The sequence spans 540 residues: Glucose-6-phosphate isomerase (540 aa).

Glu-350 serves as the catalytic Proton donor. Catalysis depends on residues His-381 and Lys-503.

Belongs to the GPI family.

It localises to the cytoplasm. It catalyses the reaction alpha-D-glucose 6-phosphate = beta-D-fructose 6-phosphate. It participates in carbohydrate biosynthesis; gluconeogenesis. It functions in the pathway carbohydrate degradation; glycolysis; D-glyceraldehyde 3-phosphate and glycerone phosphate from D-glucose: step 2/4. Catalyzes the reversible isomerization of glucose-6-phosphate to fructose-6-phosphate. In Burkholderia pseudomallei (strain 1106a), this protein is Glucose-6-phosphate isomerase.